We begin with the raw amino-acid sequence, 429 residues long: Histidinol dehydrogenase (429 aa).

The NAD(+) site is built by tyrosine 127, glutamine 188, and asparagine 211. Serine 234, glutamine 256, and histidine 259 together coordinate substrate. Positions 256 and 259 each coordinate Zn(2+). Residues glutamate 324 and histidine 325 each act as proton acceptor in the active site. Residues histidine 325, aspartate 358, glutamate 412, and histidine 417 each coordinate substrate. Aspartate 358 lines the Zn(2+) pocket. Histidine 417 provides a ligand contact to Zn(2+).

The protein belongs to the histidinol dehydrogenase family. Zn(2+) is required as a cofactor.

The catalysed reaction is L-histidinol + 2 NAD(+) + H2O = L-histidine + 2 NADH + 3 H(+). It functions in the pathway amino-acid biosynthesis; L-histidine biosynthesis; L-histidine from 5-phospho-alpha-D-ribose 1-diphosphate: step 9/9. Catalyzes the sequential NAD-dependent oxidations of L-histidinol to L-histidinaldehyde and then to L-histidine. The protein is Histidinol dehydrogenase of Bacillus cereus (strain ATCC 14579 / DSM 31 / CCUG 7414 / JCM 2152 / NBRC 15305 / NCIMB 9373 / NCTC 2599 / NRRL B-3711).